The chain runs to 149 residues: Transcriptional repressor NrdR (149 aa).

Residues 3–34 (CPFCAAEETKVVDSRLAADGYQIRRRRECTSC) fold into a zinc finger. One can recognise an ATP-cone domain in the interval 49-139 (PYVIKNNGNR…VYLSFDDIEE (91 aa)).

This sequence belongs to the NrdR family. The cofactor is Zn(2+).

Functionally, negatively regulates transcription of bacterial ribonucleotide reductase nrd genes and operons by binding to NrdR-boxes. The chain is Transcriptional repressor NrdR from Actinobacillus pleuropneumoniae serotype 5b (strain L20).